The following is a 450-amino-acid chain: Tubulin alpha chain (450 aa).

Residues Gln-11, Glu-71, Ser-140, Gly-144, Thr-145, Thr-179, Asn-206, and Asn-228 each coordinate GTP. Glu-71 contacts Mg(2+). The active site involves Glu-254.

The protein belongs to the tubulin family. Dimer of alpha and beta chains. A typical microtubule is a hollow water-filled tube with an outer diameter of 25 nm and an inner diameter of 15 nM. Alpha-beta heterodimers associate head-to-tail to form protofilaments running lengthwise along the microtubule wall with the beta-tubulin subunit facing the microtubule plus end conferring a structural polarity. Microtubules usually have 13 protofilaments but different protofilament numbers can be found in some organisms and specialized cells. It depends on Mg(2+) as a cofactor.

The protein resides in the cytoplasm. It localises to the cytoskeleton. The catalysed reaction is GTP + H2O = GDP + phosphate + H(+). Its function is as follows. Tubulin is the major constituent of microtubules, a cylinder consisting of laterally associated linear protofilaments composed of alpha- and beta-tubulin heterodimers. Microtubules grow by the addition of GTP-tubulin dimers to the microtubule end, where a stabilizing cap forms. Below the cap, tubulin dimers are in GDP-bound state, owing to GTPase activity of alpha-tubulin. This Zymoseptoria tritici (Speckled leaf blotch fungus) protein is Tubulin alpha chain.